A 160-amino-acid chain; its full sequence is Photosystem II extrinsic protein V (160 aa).

The signal sequence occupies residues 1–25 (MKRFILLAIATVFFFCQFQTNPVNA). C62, C65, H66, and H117 together coordinate heme c.

It belongs to the cytochrome c family. PsbV subfamily. As to quaternary structure, PSII is composed of 1 copy each of membrane proteins PsbA, PsbB, PsbC, PsbD, PsbE, PsbF, PsbH, PsbI, PsbJ, PsbK, PsbL, PsbM, PsbT, PsbX, PsbY, PsbZ, Psb30/Ycf12, peripheral proteins PsbO, CyanoQ (PsbQ), PsbU, PsbV and a large number of cofactors. It forms dimeric complexes. Heme c serves as cofactor.

It is found in the cellular thylakoid membrane. One of the extrinsic, lumenal subunits of photosystem II (PSII). PSII is a light-driven water plastoquinone oxidoreductase, using light energy to abstract electrons from H(2)O, generating a proton gradient subsequently used for ATP formation. The extrinsic proteins stabilize the structure of photosystem II oxygen-evolving complex (OEC), the ion environment of oxygen evolution and protect the OEC against heat-induced inactivation. Low-potential cytochrome c that plays a role in the OEC of PSII. This is Photosystem II extrinsic protein V from Rippkaea orientalis (strain PCC 8801 / RF-1) (Cyanothece sp. (strain PCC 8801)).